Reading from the N-terminus, the 251-residue chain is Ditrans,polycis-undecaprenyl-diphosphate synthase ((2E,6E)-farnesyl-diphosphate specific) (251 aa).

Asp-20 is a catalytic residue. Asp-20 provides a ligand contact to Mg(2+). Substrate is bound by residues 21–24 (GNGR), Trp-25, Arg-33, His-37, and 65–67 (SSE). The active-site Proton acceptor is Asn-68. Residues Trp-69, Arg-71, Arg-188, and 194 to 196 (RIS) each bind substrate. Glu-207 provides a ligand contact to Mg(2+).

It belongs to the UPP synthase family. Homodimer. The cofactor is Mg(2+).

It catalyses the reaction 8 isopentenyl diphosphate + (2E,6E)-farnesyl diphosphate = di-trans,octa-cis-undecaprenyl diphosphate + 8 diphosphate. In terms of biological role, catalyzes the sequential condensation of isopentenyl diphosphate (IPP) with (2E,6E)-farnesyl diphosphate (E,E-FPP) to yield (2Z,6Z,10Z,14Z,18Z,22Z,26Z,30Z,34E,38E)-undecaprenyl diphosphate (di-trans,octa-cis-UPP). UPP is the precursor of glycosyl carrier lipid in the biosynthesis of bacterial cell wall polysaccharide components such as peptidoglycan and lipopolysaccharide. This Vibrio parahaemolyticus serotype O3:K6 (strain RIMD 2210633) protein is Ditrans,polycis-undecaprenyl-diphosphate synthase ((2E,6E)-farnesyl-diphosphate specific).